Consider the following 133-residue polypeptide: ATP synthase epsilon chain (133 aa).

This sequence belongs to the ATPase epsilon chain family. In terms of assembly, F-type ATPases have 2 components, CF(1) - the catalytic core - and CF(0) - the membrane proton channel. CF(1) has five subunits: alpha(3), beta(3), gamma(1), delta(1), epsilon(1). CF(0) has three main subunits: a, b and c.

Its subcellular location is the cell membrane. Functionally, produces ATP from ADP in the presence of a proton gradient across the membrane. The protein is ATP synthase epsilon chain of Clostridium botulinum (strain Langeland / NCTC 10281 / Type F).